A 792-amino-acid chain; its full sequence is Endonuclease MutS2 (792 aa).

334-341 (GPNTGGKT) lines the ATP pocket. A Smr domain is found at 717–792 (INLIGKTTDE…DAGVTIATFK (76 aa)).

This sequence belongs to the DNA mismatch repair MutS family. MutS2 subfamily. As to quaternary structure, homodimer. Binds to stalled ribosomes, contacting rRNA.

Its function is as follows. Endonuclease that is involved in the suppression of homologous recombination and thus may have a key role in the control of bacterial genetic diversity. Functionally, acts as a ribosome collision sensor, splitting the ribosome into its 2 subunits. Detects stalled/collided 70S ribosomes which it binds and splits by an ATP-hydrolysis driven conformational change. Acts upstream of the ribosome quality control system (RQC), a ribosome-associated complex that mediates the extraction of incompletely synthesized nascent chains from stalled ribosomes and their subsequent degradation. Probably generates substrates for RQC. The sequence is that of Endonuclease MutS2 from Agathobacter rectalis (strain ATCC 33656 / DSM 3377 / JCM 17463 / KCTC 5835 / VPI 0990) (Eubacterium rectale).